Here is a 257-residue protein sequence, read N- to C-terminus: Phosphate import ATP-binding protein PstB (257 aa).

Residues 4–252 (LKLNDVNIYY…PDNKETEDYI (249 aa)) enclose the ABC transporter domain. Residue 36–43 (GPSGCGKS) coordinates ATP.

Belongs to the ABC transporter superfamily. Phosphate importer (TC 3.A.1.7) family. The complex is composed of two ATP-binding proteins (PstB), two transmembrane proteins (PstC and PstA) and a solute-binding protein (PstS).

The protein localises to the cell membrane. It catalyses the reaction phosphate(out) + ATP + H2O = ADP + 2 phosphate(in) + H(+). Functionally, part of the ABC transporter complex PstSACB involved in phosphate import. Responsible for energy coupling to the transport system. This Corynebacterium efficiens (strain DSM 44549 / YS-314 / AJ 12310 / JCM 11189 / NBRC 100395) protein is Phosphate import ATP-binding protein PstB.